A 456-amino-acid chain; its full sequence is Perilipin-5 (456 aa).

The tract at residues 1 to 20 (MSEDEAAQAPGPSLSEQDQQ) is disordered. An interaction with LIPE region spans residues 1 to 108 (MSEDEAAQAP…KLEEKLPFLQ (108 aa)). The essential for lipid droplet targeting stretch occupies residues 1–173 (MSEDEAAQAP…HFLPMTEEEL (173 aa)). Phosphoserine is present on residues serine 2, serine 148, and serine 324. The interval 185 to 456 (VGSVEEQRKH…KHTLMPELDF (272 aa)) is interaction with PNPLA2 and ABHD5. Residues 420-456 (AWQAQHGEGTVLSGNIPEEEPEPPSRPKHTLMPELDF) are disordered. The tract at residues 438–456 (EEPEPPSRPKHTLMPELDF) is recruits mitochondria at the lipid droplet surface.

It belongs to the perilipin family. In terms of assembly, homooligomer. Interacts with PNPLA2; prevents interaction of PNPLA2 with ABHD5. Interacts with ABHD5; targets ABHD5 to lipid droplets and promotes interaction of ABHD5 with PNPLA2. Interacts with LIPE. In terms of processing, phosphorylated by PKA. Phosphorylated on serine in skeletal muscle at rest or upon lipolytic stimulation.

It localises to the lipid droplet. It is found in the cytoplasm. The protein resides in the mitochondrion. Its function is as follows. Lipid droplet-associated protein that maintains the balance between lipogenesis and lipolysis and also regulates fatty acid oxidation in oxidative tissues. Recruits mitochondria to the surface of lipid droplets and is involved in lipid droplet homeostasis by regulating both the storage of fatty acids in the form of triglycerides and the release of fatty acids for mitochondrial fatty acid oxidation. In lipid droplet triacylglycerol hydrolysis, plays a role as a scaffolding protein for three major key lipolytic players: ABHD5, PNPLA2 and LIPE. Reduces the triacylglycerol hydrolase activity of PNPLA2 by recruiting and sequestering PNPLA2 to lipid droplets. Phosphorylation by PKA enables lipolysis probably by promoting release of ABHD5 from the perilipin scaffold and by facilitating interaction of ABHD5 with PNPLA2. Also increases lipolysis through interaction with LIPE and upon PKA-mediated phosphorylation of LIPE. The protein is Perilipin-5 (Plin5) of Ovis aries (Sheep).